Reading from the N-terminus, the 838-residue chain is Translation initiation factor IF-2 (838 aa).

The interval 50–108 (VQSGKKPESPEKKDIKQNTQKEAPETQTQQKPIEQEVETKQNIDSTPIKVEPKQESLAS) is disordered. A compositionally biased stretch (basic and acidic residues) spans 54-65 (KKPESPEKKDIK). A compositionally biased stretch (polar residues) spans 66 to 81 (QNTQKEAPETQTQQKP). Residues 337-506 (SRAPVVTIMG…LLQAELLELK (170 aa)) enclose the tr-type G domain. The tract at residues 346–353 (GHVDHGKT) is G1. 346-353 (GHVDHGKT) serves as a coordination point for GTP. The interval 371–375 (GITQH) is G2. The segment at 392–395 (DTPG) is G3. Residues 392-396 (DTPGH) and 446-449 (NKMD) contribute to the GTP site. A G4 region spans residues 446-449 (NKMD). The interval 482–484 (SAK) is G5.

It belongs to the TRAFAC class translation factor GTPase superfamily. Classic translation factor GTPase family. IF-2 subfamily.

Its subcellular location is the cytoplasm. One of the essential components for the initiation of protein synthesis. Protects formylmethionyl-tRNA from spontaneous hydrolysis and promotes its binding to the 30S ribosomal subunits. Also involved in the hydrolysis of GTP during the formation of the 70S ribosomal complex. The sequence is that of Translation initiation factor IF-2 from Campylobacter fetus subsp. fetus (strain 82-40).